Here is a 35-residue protein sequence, read N- to C-terminus: U1-segestritoxin-Sf1a (35 aa).

Disulfide bonds link C10-C22 and C17-C28. The interval 31 to 33 is keys region for toxin activity; that stretch reads DPW.

This sequence belongs to the neurotoxin 16 (SFI) family. In terms of tissue distribution, expressed by the venom gland.

The protein resides in the secreted. Its function is as follows. Insecticidal toxin. This is U1-segestritoxin-Sf1a from Segestria florentina (Tube-web spider).